The sequence spans 177 residues: Putative HVA22-like protein g (177 aa).

The disordered stretch occupies residues 145 to 165; it reads QSTPKSKAEEKKETTIPKLDD. A compositionally biased stretch (basic and acidic residues) spans 150-165; sequence SKAEEKKETTIPKLDD.

The protein belongs to the DP1 family.

The polypeptide is Putative HVA22-like protein g (HVA22G) (Arabidopsis thaliana (Mouse-ear cress)).